The following is a 305-amino-acid chain: MSKKLTFQEIILTLQRFWNDQGCMLMQAYDNEKGAGTMSPYTFLRAIGPEPWNAAYVEPSRRPADGRYGENPNRLYQHHQFQVVMKPSPSNIQELYLESLEKLGINPLEHDIRFVEDNWENPSTGSAGLGWEVWLDGMEITQFTYFQQVGGLATSPVTAEVTYGLERLASYIQEVDSVYDIEWADGVKYGEIFIQPEYEHSKYSFEISDQEMLLENFDKFEKEAGRALEEGLVHPAYDYVLKCSHTFNLLDARGAVSVTERAGYIARIRNLARVVAKTFVAERKRLGYPLLDEETRAKLLAEDAE.

Belongs to the class-II aminoacyl-tRNA synthetase family. Tetramer of two alpha and two beta subunits.

Its subcellular location is the cytoplasm. It carries out the reaction tRNA(Gly) + glycine + ATP = glycyl-tRNA(Gly) + AMP + diphosphate. In Streptococcus pneumoniae (strain Hungary19A-6), this protein is Glycine--tRNA ligase alpha subunit.